Here is a 199-residue protein sequence, read N- to C-terminus: Cutinase CUT1 (199 aa).

Residues 1 to 18 (MKFTTLATLALGAVSALA) form the signal peptide. The propeptide occupies 19–27 (APVTELESR). Glutamine 28 carries the post-translational modification Pyrrolidone carboxylic acid. Cysteine 31 and cysteine 105 are oxidised to a cystine. Serine 116 (nucleophile) is an active-site residue. An intrachain disulfide couples cysteine 164 to cysteine 171. The active site involves aspartate 168. Residue histidine 181 is the Proton donor/acceptor of the active site.

It belongs to the cutinase family. The 2 disulfide bonds play a critical role in holding the catalytic residues in juxta-position; reduction of the disulfide bridges results in the complete inactivation of the enzyme.

The enzyme catalyses cutin + H2O = cutin monomers.. Functionally, catalyzes the hydrolysis of complex carboxylic polyesters found in the cell wall of plants. Degrades cutin, a macromolecule that forms the structure of the plant cuticle. Also degrades suberin, a specialized macromolecule found in the cell wall of various plant tissues. This chain is Cutinase CUT1, found in Coprinopsis cinerea (Inky cap fungus).